The following is a 468-amino-acid chain: 6-phosphogluconate dehydrogenase, decarboxylating (468 aa).

NADP(+) is bound by residues 9 to 14 (GLAVMG), 32 to 34 (NRS), 73 to 75 (VQA), and Asn-101. Substrate contacts are provided by residues Asn-101 and 127-129 (SGG). Catalysis depends on Lys-182, which acts as the Proton acceptor. Position 185 to 186 (185 to 186 (HN)) interacts with substrate. The active-site Proton donor is the Glu-189. Residues Tyr-190, Lys-259, Arg-286, Arg-444, and His-450 each contribute to the substrate site.

It belongs to the 6-phosphogluconate dehydrogenase family. As to quaternary structure, homodimer.

It carries out the reaction 6-phospho-D-gluconate + NADP(+) = D-ribulose 5-phosphate + CO2 + NADPH. Its pathway is carbohydrate degradation; pentose phosphate pathway; D-ribulose 5-phosphate from D-glucose 6-phosphate (oxidative stage): step 3/3. Its function is as follows. Catalyzes the oxidative decarboxylation of 6-phosphogluconate to ribulose 5-phosphate and CO(2), with concomitant reduction of NADP to NADPH. The sequence is that of 6-phosphogluconate dehydrogenase, decarboxylating (gnd) from Staphylococcus aureus (strain Mu50 / ATCC 700699).